The sequence spans 357 residues: UPF0283 membrane protein BCAN_A1047 (357 aa).

The tract at residues 1–36 (MSDKTPRKPTAFRLEQPARVSAASEQEEPRRPRAVK) is disordered. Residues 27–36 (EEPRRPRAVK) show a composition bias toward basic and acidic residues. The next 2 helical transmembrane spans lie at 78-98 (ILFG…TEDL) and 109-129 (LGWT…AIIL).

It belongs to the UPF0283 family.

Its subcellular location is the cell inner membrane. This chain is UPF0283 membrane protein BCAN_A1047, found in Brucella canis (strain ATCC 23365 / NCTC 10854 / RM-666).